A 578-amino-acid chain; its full sequence is Arginine--tRNA ligase (578 aa).

The short motif at 127–137 (PNLAKEMHVGH) is the 'HIGH' region element.

This sequence belongs to the class-I aminoacyl-tRNA synthetase family. As to quaternary structure, monomer.

Its subcellular location is the cytoplasm. It catalyses the reaction tRNA(Arg) + L-arginine + ATP = L-arginyl-tRNA(Arg) + AMP + diphosphate. The polypeptide is Arginine--tRNA ligase (Pseudomonas syringae pv. tomato (strain ATCC BAA-871 / DC3000)).